We begin with the raw amino-acid sequence, 506 residues long: Maturase K (506 aa).

Belongs to the intron maturase 2 family. MatK subfamily.

It localises to the plastid. The protein resides in the chloroplast. Usually encoded in the trnK tRNA gene intron. Probably assists in splicing its own and other chloroplast group II introns. The polypeptide is Maturase K (Olea europaea (Common olive)).